Here is a 201-residue protein sequence, read N- to C-terminus: Peptidyl-tRNA hydrolase (201 aa).

Tyr-14 contributes to the tRNA binding site. The active-site Proton acceptor is the His-19. TRNA contacts are provided by Tyr-64, Asn-66, and Asn-112.

This sequence belongs to the PTH family. Monomer.

The protein localises to the cytoplasm. It carries out the reaction an N-acyl-L-alpha-aminoacyl-tRNA + H2O = an N-acyl-L-amino acid + a tRNA + H(+). Its function is as follows. Hydrolyzes ribosome-free peptidyl-tRNAs (with 1 or more amino acids incorporated), which drop off the ribosome during protein synthesis, or as a result of ribosome stalling. In terms of biological role, catalyzes the release of premature peptidyl moieties from peptidyl-tRNA molecules trapped in stalled 50S ribosomal subunits, and thus maintains levels of free tRNAs and 50S ribosomes. This Afipia carboxidovorans (strain ATCC 49405 / DSM 1227 / KCTC 32145 / OM5) (Oligotropha carboxidovorans) protein is Peptidyl-tRNA hydrolase.